The sequence spans 183 residues: Dual-action ribosomal maturation protein DarP (183 aa).

It belongs to the DarP family.

The protein resides in the cytoplasm. Its function is as follows. Member of a network of 50S ribosomal subunit biogenesis factors which assembles along the 30S-50S interface, preventing incorrect 23S rRNA structures from forming. Promotes peptidyl transferase center (PTC) maturation. The chain is Dual-action ribosomal maturation protein DarP from Escherichia coli O7:K1 (strain IAI39 / ExPEC).